The following is a 629-amino-acid chain: MEIGGSGAPPPLLLLPLLLLLGTGLLPASSHIETRAHAEERLLKRLFSGYNKWSRPVANISDVVLVRFGLSIAQLIDVDEKNQMMTTNVWVKQEWHDYKLRWDPGDYENVTSIRIPSELIWRPDIVLYNNADGDFAVTHLTKAHLFYDGRVQWTPPAIYKSSCSIDVTFFPFDQQNCTMKFGSWTYDKAKIDLVSMHSRVDQLDFWESGEWVIVDAVGTYNTRKYECCAEIYPDITYAFIIRRLPLFYTINLIIPCLLISCLTVLVFYLPSECGEKVTLCISVLLSLTVFLLLITEIIPSTSLVIPLIGEYLLFTMIFVTLSIVITVFVLNVHHRSPRTHTMPAWVRRVFLDIVPRLLFMKRPSVVKDNCRRLIESMHKMANAPRFWPEPESEPGILGDICNQGLSPAPTFCNRMDTAVETQPTCRSPSHKVPDLKTSEVEKASPCPSPGSCHPPNSSGAPVLIKARSLSVQHVPSSQEAAEGSIRCRSRSIQYCVSQDGAASLTESKPTGSPASLKTRPSQLPVSDQTSPCKCTCKEPSPVSPITVLKAGGTKAPPQHLPLSPALTRAVEGVQYIADHLKAEDTDFSVKEDWKYVAMVIDRIFLWMFIIVCLLGTVGLFLPPWLAGMI.

An N-terminal signal peptide occupies residues 1–30 (MEIGGSGAPPPLLLLPLLLLLGTGLLPASS). Residues 32-249 (IETRAHAEER…IIRRLPLFYT (218 aa)) are Extracellular-facing. N59 carries an N-linked (GlcNAc...) asparagine glycan. Residues V78 and E80 each contribute to the Ca(2+) site. Residues N109 and N176 are each glycosylated (N-linked (GlcNAc...) asparagine). Intrachain disulfides connect C163-C177 and C227-C228. Residues 250-270 (INLIIPCLLISCLTVLVFYLP) form a helical membrane-spanning segment. C273 carries the S-palmitoyl cysteine lipid modification. A run of 2 helical transmembrane segments spans residues 279-299 (LCISVLLSLTVFLLLITEIIP) and 312-332 (LLFTMIFVTLSIVITVFVLNV). Over 333–603 (HHRSPRTHTM…KYVAMVIDRI (271 aa)) the chain is Cytoplasmic. Disordered stretches follow at residues 420-459 (ETQPTCRSPSHKVPDLKTSEVEKASPCPSPGSCHPPNSSG) and 503-529 (SLTESKPTGSPASLKTRPSQLPVSDQT). The residue at position 427 (S427) is a Phosphoserine. Residues 431-442 (KVPDLKTSEVEK) are compositionally biased toward basic and acidic residues. Residues 449–459 (PGSCHPPNSSG) show a composition bias toward low complexity. A compositionally biased stretch (polar residues) spans 504-529 (LTESKPTGSPASLKTRPSQLPVSDQT). S540 and S543 each carry phosphoserine. A helical membrane pass occupies residues 604 to 624 (FLWMFIIVCLLGTVGLFLPPW).

Belongs to the ligand-gated ion channel (TC 1.A.9) family. Acetylcholine receptor (TC 1.A.9.1) subfamily. Alpha-4/CHRNA4 sub-subfamily. As to quaternary structure, neuronal AChR is composed of two different types of subunits: alpha and beta. CHRNA4 forms heteropentameric neuronal acetylcholine receptors with CHRNB2 and CHRNB4, as well as CHRNA5 and CHRNB3 as accesory subunits. Found in two major stoichiometric forms, LS (low agonist sensitivity): (CHRNA4)3:(CHRNB2)2 and HS (high agonist sensitivity): (CHRNA4)2:(CHRNB2)3, the two stoichiometric forms differ in their unitary conductance, calcium permeability, ACh sensitivity and potentiation by divalent cation. Cells produce predominantly an (CHRNA4)3:(CHRNB2)2 nAChR. The (CHRNA4)2:(CHRNB2)3 expression is selectively up-regulated by nicotine and has lower single channel conductance and calcium permeability. In the striatum, also forms CHRNA4:CHRNA6:CHRNB2 complexes. Also found in the stoichiometric form: (CHRNA4:CHRNB2)2:CHRNB3. Interacts with RIC3; which is required for proper folding and assembly. Interacts with LYPD6.

Its subcellular location is the synaptic cell membrane. It is found in the cell membrane. The enzyme catalyses K(+)(in) = K(+)(out). It carries out the reaction Na(+)(in) = Na(+)(out). It catalyses the reaction Ca(2+)(in) = Ca(2+)(out). Activated by a myriad of ligands such as acetylcholine, cytisine, nicotine, choline and epibatidine. Channel potentiation by calcium is stoichiometry-selective, CHRNA4:CHRNB2 nACh receptor is achieved by calcium association with topographically distinct sites framed by anionic residues within the CHRNA4 subunit and between the CHRNA4 and CHRNB2 subunits. nAChR activity is inhibited by the antagonist alpha-conotoxins BuIA, PnIA, GID and MII, small disulfide-constrained peptides from cone snails. Component of neuronal acetylcholine receptors (nAChRs) that function as pentameric, ligand-gated cation channels with high calcium permeability among other activities. nAChRs are excitatory neurotrasnmitter receptors formed by a collection of nAChR subunits known to mediate synaptic transmission in the nervous system and the neuromuscular junction. Each nAchR subunit confers differential attributes to channel properties, including activation, deactivation and desensitization kinetics, pH sensitivity, cation permeability, and binding to allosteric modulators. CHRNA4 forms heteropentameric neuronal acetylcholine receptors with CHRNB2 and CHRNB4, as well as CHRNA5 and CHRNB3 as accesory subunits. Is the most abundant nAChR subtype expressed in the central nervous system. Found in two major stoichiometric forms,(CHRNA4)3:(CHRNB2)2 and (CHRNA4)2:(CHRNB2)3, the two stoichiometric forms differ in their unitary conductance, calcium permeability, ACh sensitivity and potentiation by divalent cation. Involved in the modulation of calcium-dependent signaling pathways, influences the release of neurotransmitters, including dopamine, glutamate and GABA. This chain is Neuronal acetylcholine receptor subunit alpha-4 (Chrna4), found in Mus musculus (Mouse).